The sequence spans 233 residues: Octanoyltransferase (233 aa).

The BPL/LPL catalytic domain occupies 36-211 (DTTPDEIWLV…EFTRQLGYPT (176 aa)). Substrate-binding positions include 75 to 82 (RGGQVTYH), 142 to 144 (SLG), and 155 to 157 (GLA). Cys173 (acyl-thioester intermediate) is an active-site residue.

This sequence belongs to the LipB family.

The protein resides in the cytoplasm. The catalysed reaction is octanoyl-[ACP] + L-lysyl-[protein] = N(6)-octanoyl-L-lysyl-[protein] + holo-[ACP] + H(+). The protein operates within protein modification; protein lipoylation via endogenous pathway; protein N(6)-(lipoyl)lysine from octanoyl-[acyl-carrier-protein]: step 1/2. Catalyzes the transfer of endogenously produced octanoic acid from octanoyl-acyl-carrier-protein onto the lipoyl domains of lipoate-dependent enzymes. Lipoyl-ACP can also act as a substrate although octanoyl-ACP is likely to be the physiological substrate. This chain is Octanoyltransferase, found in Yersinia pestis bv. Antiqua (strain Antiqua).